A 92-amino-acid chain; its full sequence is Auxin-responsive protein SAUR28 (92 aa).

The protein belongs to the ARG7 family. Higher expression in thermo-responsive cultivars (e.g. cv. Alst-1, cv. Ang-0 and cv. Com-0) than in low thermo-responsive cultivars (e.g. cv. Dja-1, cv. El-0 and cv. Kon).

Its subcellular location is the cell membrane. Functions as a positive effector of cell expansion through modulation of auxin transport. Involved in thermo-responsiveness of plant architecture. Enhances plasma membrane H(+)-ATPase. The protein is Auxin-responsive protein SAUR28 of Arabidopsis thaliana (Mouse-ear cress).